A 96-amino-acid polypeptide reads, in one-letter code: C-C motif chemokine 20 (96 aa).

The N-terminal stretch at 1–26 (MCCTKSLLLAALMSVLLLHLCGESEA) is a signal peptide. Disulfide bonds link Cys-32–Cys-58 and Cys-33–Cys-74.

The protein belongs to the intercrine beta (chemokine CC) family. Post-translationally, C-terminal processed forms which lack 1, 3 or 6 amino acids are produced by proteolytic cleavage after secretion from peripheral blood monocytes. As to expression, expressed in the seminal plasma, endometrial fluid and follicular fluid (at protein level). Expressed predominantly in the liver, lymph nodes, appendix, peripheral blood lymphocytes, and fetal lung. Low levels seen in thymus, prostate, testis, small intestine and colon.

The protein localises to the secreted. Functionally, acts as a ligand for C-C chemokine receptor CCR6. Signals through binding and activation of CCR6 and induces a strong chemotactic response and mobilization of intracellular calcium ions. The ligand-receptor pair CCL20-CCR6 is responsible for the chemotaxis of dendritic cells (DC), effector/memory T-cells and B-cells and plays an important role at skin and mucosal surfaces under homeostatic and inflammatory conditions, as well as in pathology, including cancer and various autoimmune diseases. CCL20 acts as a chemotactic factor that attracts lymphocytes and, slightly, neutrophils, but not monocytes. Involved in the recruitment of both the pro-inflammatory IL17 producing helper T-cells (Th17) and the regulatory T-cells (Treg) to sites of inflammation. Required for optimal migration of thymic natural regulatory T cells (nTregs) and DN1 early thymocyte progenitor cells. C-terminal processed forms have been shown to be equally chemotactically active for leukocytes. Positively regulates sperm motility and chemotaxis via its binding to CCR6 which triggers Ca2+ mobilization in the sperm which is important for its motility. Inhibits proliferation of myeloid progenitors in colony formation assays. May be involved in formation and function of the mucosal lymphoid tissues by attracting lymphocytes and dendritic cells towards epithelial cells. Possesses antibacterial activity towards E.coli ATCC 25922 and S.aureus ATCC 29213. The sequence is that of C-C motif chemokine 20 (CCL20) from Homo sapiens (Human).